We begin with the raw amino-acid sequence, 1157 residues long: Folliculin-interacting protein 1 (1157 aa).

Residues 37-467 (FDPSQIRLIV…TVMPNGQPPI (431 aa)) enclose the uDENN FNIP1/2-type domain. 4 disordered regions span residues 92-120 (PGGD…CPKY), 616-665 (SQQE…TKVE), 769-796 (SPPT…NRDC), and 904-955 (VPHG…NYYG). Residues 95 to 111 (DSSSSLDSSINSSSSFS) show a composition bias toward low complexity. One can recognise a cDENN FNIP1/2-type domain in the interval 475-1083 (SSQSVDMLAK…VSNLLHSTLQ (609 aa)). Basic and acidic residues predominate over residues 651–664 (ADGHQPRTCQDTKV). The segment covering 904–916 (VPHGDRENAEKKV) has biased composition (basic and acidic residues). Residues 1093–1148 (FCVMHLEDRLQELYFKSKMLSEYLKGQMRVHVKELGVVLGIESSDLPLLAAVASTH) form the dDENN FNIP1/2-type domain.

This sequence belongs to the FNIP family. Homodimer and homomultimer. Heterodimer and heteromultimer with FNIP2. Component of the lysosomal folliculin complex (LFC).

The protein localises to the lysosome membrane. It localises to the cytoplasm. Its subcellular location is the cytosol. Functionally, binding partner of the GTPase-activating protein FLCN: involved in the cellular response to amino acid availability by regulating the non-canonical mTORC1 signaling cascade controlling the MiT/TFE factors TFEB and TFE3. Required to promote FLCN recruitment to lysosomes and interaction with Rag GTPases, leading to activation of the non-canonical mTORC1 signaling. In low-amino acid conditions, component of the lysosomal folliculin complex (LFC) on the membrane of lysosomes, which inhibits the GTPase-activating activity of FLCN, thereby inactivating mTORC1 and promoting nuclear translocation of TFEB and TFE3. Upon amino acid restimulation, disassembly of the LFC complex liberates the GTPase-activating activity of FLCN, leading to activation of mTORC1 and subsequent inactivation of TFEB and TFE3. In addition to its role in mTORC1 signaling, also acts as a co-chaperone of HSP90AA1/Hsp90: inhibits the ATPase activity of HSP90AA1/Hsp90, leading to activate both kinase and non-kinase client proteins of HSP90AA1/Hsp90. Acts as a scaffold to load client protein FLCN onto HSP90AA1/Hsp90. This chain is Folliculin-interacting protein 1, found in Gallus gallus (Chicken).